The sequence spans 480 residues: Prostacyclin synthase (480 aa).

The helical transmembrane segment at 1–21 threads the bilayer; the sequence is MMWTALLLVGLSILVIVLYGR. Residues Arg-104, Leu-110, Asn-277, 338-339, and Arg-362 each bind substrate; that span reads TR. Cys-421 serves as a coordination point for heme.

Belongs to the cytochrome P450 family. Heme serves as cofactor.

Its subcellular location is the endoplasmic reticulum membrane. The enzyme catalyses prostaglandin H2 = prostaglandin I2. The catalysed reaction is a hydroperoxyeicosatetraenoate = an oxoeicosatetraenoate + H2O. It catalyses the reaction (15S)-hydroperoxy-(5Z,8Z,11Z,13E)-eicosatetraenoate = 15-oxo-(5Z,8Z,11Z,13E)-eicosatetraenoate + H2O. It carries out the reaction (15S)-hydroperoxy-(5Z,8Z,11Z,13E)-eicosatetraenoate + AH2 = (15S)-hydroxy-(5Z,8Z,11Z,13E)-eicosatetraenoate + A + H2O. Catalyzes the isomerization of prostaglandin H2 to prostacyclin (= prostaglandin I2). Its function is as follows. Catalyzes the biosynthesis and metabolism of eicosanoids. Catalyzes the isomerization of prostaglandin H2 to prostacyclin (= prostaglandin I2), a potent mediator of vasodilation and inhibitor of platelet aggregation. Additionally, displays dehydratase activity, toward hydroperoxyeicosatetraenoates (HPETEs), especially toward (15S)-hydroperoxy-(5Z,8Z,11Z,13E)-eicosatetraenoate (15(S)-HPETE). This chain is Prostacyclin synthase, found in Danio rerio (Zebrafish).